The sequence spans 55 residues: GRPSARYDAPYCSQEEVRECQDDCSGNAVRDSCLCAYDPAGSPACECRCVEPWRR.

Residues 1-5 (GRPSA) constitute a propeptide that is removed on maturation.

Post-translationally, contains 4 disulfide bonds. Expressed by the venom duct.

Its subcellular location is the secreted. Its function is as follows. Probable neurotoxin with unknown target. Possibly targets ion channels. The protein is Conotoxin Cal22d of Californiconus californicus (California cone).